The primary structure comprises 443 residues: ASTRA-associated protein 1 (443 aa).

4 WD repeats span residues 23 to 67, 71 to 110, 258 to 295, and 318 to 359; these read YHKR…PITH, EGNSHIIAFWWVETTNVLYILSKDSMLRIFELDSSTQLSI, HYPNPILDMCVSGDELYSCSTDDFITKYKIPVNLQLET, and KVHL…VEQT. The disordered stretch occupies residues 372–391; that stretch reads SSMGDLTNGSGSNTESSSKS. Positions 378–391 are enriched in low complexity; the sequence is TNGSGSNTESSSKS.

It belongs to the WD repeat ASA1 family. Component of the ASTRA chromatin remodeling machinery complex composed of at least RVB1, RVB2, TRA1, TEL2, TTI1 and TTI2.

Its subcellular location is the nucleus. Its function is as follows. Component of the ASTRA complex involved in chromatin remodeling. This is ASTRA-associated protein 1 (ASA1) from Saccharomyces cerevisiae (strain RM11-1a) (Baker's yeast).